A 173-amino-acid polypeptide reads, in one-letter code: Invasion protein B homolog BruAb1_0366 (173 aa).

Positions 1–23 (MKNYRAIGLAFTFTALSSLSAFA) are cleaved as a signal peptide.

The protein belongs to the IalB family.

In Brucella abortus biovar 1 (strain 9-941), this protein is Invasion protein B homolog BruAb1_0366.